The chain runs to 171 residues: Large ribosomal subunit protein uL15 (171 aa).

Residues 1 to 10 (MKLNEISDNN) are compositionally biased toward polar residues. Disordered regions lie at residues 1-44 (MKLN…RSGV) and 150-171 (LPEA…NKAK). Positions 21 to 35 (RGIGSGKGKTAGRGQ) are enriched in gly residues. A compositionally biased stretch (basic and acidic residues) spans 157–171 (EQEKKAARREANKAK).

The protein belongs to the universal ribosomal protein uL15 family. Part of the 50S ribosomal subunit.

In terms of biological role, binds to the 23S rRNA. This is Large ribosomal subunit protein uL15 from Novosphingobium aromaticivorans (strain ATCC 700278 / DSM 12444 / CCUG 56034 / CIP 105152 / NBRC 16084 / F199).